The chain runs to 416 residues: UDP-N-acetylmuramoylalanine--D-glutamate ligase (416 aa).

Position 104–110 (104–110) interacts with ATP; it reads GSNGKST.

This sequence belongs to the MurCDEF family.

The protein resides in the cytoplasm. The enzyme catalyses UDP-N-acetyl-alpha-D-muramoyl-L-alanine + D-glutamate + ATP = UDP-N-acetyl-alpha-D-muramoyl-L-alanyl-D-glutamate + ADP + phosphate + H(+). The protein operates within cell wall biogenesis; peptidoglycan biosynthesis. Cell wall formation. Catalyzes the addition of glutamate to the nucleotide precursor UDP-N-acetylmuramoyl-L-alanine (UMA). In Francisella tularensis subsp. mediasiatica (strain FSC147), this protein is UDP-N-acetylmuramoylalanine--D-glutamate ligase.